Consider the following 126-residue polypeptide: Small ribosomal subunit protein uS12 (126 aa).

Aspartate 89 bears the 3-methylthioaspartic acid mark. Residues glycine 106–alanine 126 form a disordered region.

It belongs to the universal ribosomal protein uS12 family. As to quaternary structure, part of the 30S ribosomal subunit. Contacts proteins S8 and S17. May interact with IF1 in the 30S initiation complex.

In terms of biological role, with S4 and S5 plays an important role in translational accuracy. Interacts with and stabilizes bases of the 16S rRNA that are involved in tRNA selection in the A site and with the mRNA backbone. Located at the interface of the 30S and 50S subunits, it traverses the body of the 30S subunit contacting proteins on the other side and probably holding the rRNA structure together. The combined cluster of proteins S8, S12 and S17 appears to hold together the shoulder and platform of the 30S subunit. This chain is Small ribosomal subunit protein uS12, found in Tremblaya princeps.